Consider the following 418-residue polypeptide: Serine--tRNA ligase (418 aa).

Position 226–228 (226–228 (TSE)) interacts with L-serine. Residues 257-259 (RRE) and Val273 contribute to the ATP site. Glu280 is an L-serine binding site. 344 to 347 (ELTS) contacts ATP. An L-serine-binding site is contributed by Thr379.

The protein belongs to the class-II aminoacyl-tRNA synthetase family. Type-1 seryl-tRNA synthetase subfamily. As to quaternary structure, homodimer. The tRNA molecule binds across the dimer.

It is found in the cytoplasm. The enzyme catalyses tRNA(Ser) + L-serine + ATP = L-seryl-tRNA(Ser) + AMP + diphosphate + H(+). It catalyses the reaction tRNA(Sec) + L-serine + ATP = L-seryl-tRNA(Sec) + AMP + diphosphate + H(+). The protein operates within aminoacyl-tRNA biosynthesis; selenocysteinyl-tRNA(Sec) biosynthesis; L-seryl-tRNA(Sec) from L-serine and tRNA(Sec): step 1/1. Its function is as follows. Catalyzes the attachment of serine to tRNA(Ser). Is also able to aminoacylate tRNA(Sec) with serine, to form the misacylated tRNA L-seryl-tRNA(Sec), which will be further converted into selenocysteinyl-tRNA(Sec). The chain is Serine--tRNA ligase from Mycobacteroides abscessus (strain ATCC 19977 / DSM 44196 / CCUG 20993 / CIP 104536 / JCM 13569 / NCTC 13031 / TMC 1543 / L948) (Mycobacterium abscessus).